Consider the following 418-residue polypeptide: Gamma-glutamyl phosphate reductase (418 aa).

This sequence belongs to the gamma-glutamyl phosphate reductase family.

The protein resides in the cytoplasm. The enzyme catalyses L-glutamate 5-semialdehyde + phosphate + NADP(+) = L-glutamyl 5-phosphate + NADPH + H(+). It participates in amino-acid biosynthesis; L-proline biosynthesis; L-glutamate 5-semialdehyde from L-glutamate: step 2/2. Functionally, catalyzes the NADPH-dependent reduction of L-glutamate 5-phosphate into L-glutamate 5-semialdehyde and phosphate. The product spontaneously undergoes cyclization to form 1-pyrroline-5-carboxylate. The chain is Gamma-glutamyl phosphate reductase from Geobacter sp. (strain M21).